Consider the following 265-residue polypeptide: Phosphatidylglycerol--prolipoprotein diacylglyceryl transferase (265 aa).

A run of 7 helical transmembrane segments spans residues 11–31, 56–76, 91–111, 120–140, 173–193, 198–218, and 233–253; these read AVSI…FGFI, MVTW…ILFY, IWHG…AVWL, FLSV…FGRI, QLYE…WFSG, VGAV…AVEF, and WLTM…WLLL. Residue Arg-139 coordinates a 1,2-diacyl-sn-glycero-3-phospho-(1'-sn-glycerol).

This sequence belongs to the Lgt family.

The protein resides in the cell inner membrane. The enzyme catalyses L-cysteinyl-[prolipoprotein] + a 1,2-diacyl-sn-glycero-3-phospho-(1'-sn-glycerol) = an S-1,2-diacyl-sn-glyceryl-L-cysteinyl-[prolipoprotein] + sn-glycerol 1-phosphate + H(+). It participates in protein modification; lipoprotein biosynthesis (diacylglyceryl transfer). Functionally, catalyzes the transfer of the diacylglyceryl group from phosphatidylglycerol to the sulfhydryl group of the N-terminal cysteine of a prolipoprotein, the first step in the formation of mature lipoproteins. The polypeptide is Phosphatidylglycerol--prolipoprotein diacylglyceryl transferase (Nitratidesulfovibrio vulgaris (strain DSM 19637 / Miyazaki F) (Desulfovibrio vulgaris)).